Reading from the N-terminus, the 664-residue chain is Methionine--tRNA ligase (664 aa).

The short motif at 13-23 (PYTNGPCHIGH) is the 'HIGH' region element. 4 residues coordinate Zn(2+): cysteine 144, cysteine 147, cysteine 156, and cysteine 160. Residues 327–331 (KFSKS) carry the 'KMSKS' region motif. Lysine 330 is an ATP binding site. The tRNA-binding domain occupies 566 to 664 (EFGNLDIRIA…RPVKPGTKIR (99 aa)).

It belongs to the class-I aminoacyl-tRNA synthetase family. MetG type 1 subfamily. As to quaternary structure, homodimer. Requires Zn(2+) as cofactor.

It is found in the cytoplasm. The catalysed reaction is tRNA(Met) + L-methionine + ATP = L-methionyl-tRNA(Met) + AMP + diphosphate. Functionally, is required not only for elongation of protein synthesis but also for the initiation of all mRNA translation through initiator tRNA(fMet) aminoacylation. The protein is Methionine--tRNA ligase of Methanoculleus marisnigri (strain ATCC 35101 / DSM 1498 / JR1).